The following is a 439-amino-acid chain: Dihydroorotase (439 aa).

2 residues coordinate Zn(2+): H65 and H67. Residues 67–69 (HFR) and N99 each bind substrate. D156, H183, H246, and D321 together coordinate Zn(2+). The active site involves D321. Residues H325 and 339 to 340 (FG) each bind substrate.

This sequence belongs to the metallo-dependent hydrolases superfamily. DHOase family. Class I DHOase subfamily. Zn(2+) serves as cofactor.

The enzyme catalyses (S)-dihydroorotate + H2O = N-carbamoyl-L-aspartate + H(+). Its pathway is pyrimidine metabolism; UMP biosynthesis via de novo pathway; (S)-dihydroorotate from bicarbonate: step 3/3. Functionally, catalyzes the reversible cyclization of carbamoyl aspartate to dihydroorotate. This chain is Dihydroorotase, found in Chlorobaculum tepidum (strain ATCC 49652 / DSM 12025 / NBRC 103806 / TLS) (Chlorobium tepidum).